We begin with the raw amino-acid sequence, 503 residues long: Na(+)-translocating NADH-quinone reductase subunit B (503 aa).

The next 4 helical transmembrane spans lie at 55 to 75 (MMLV…NSGI), 120 to 140 (IFLP…VLFA), 161 to 181 (TLPP…GVVV), and 186 to 206 (FGGT…FLFF). Thr248 is modified (FMN phosphoryl threonine). 5 helical membrane-spanning segments follow: residues 361–381 (TSTF…IASW), 387–407 (FGIG…LIAG), 417–437 (FFIP…LVFM), 452–472 (WIYG…NPAY), and 475–495 (GVML…YFAV).

It belongs to the NqrB/RnfD family. As to quaternary structure, composed of six subunits; NqrA, NqrB, NqrC, NqrD, NqrE and NqrF. The cofactor is FMN.

Its subcellular location is the cell inner membrane. The enzyme catalyses a ubiquinone + n Na(+)(in) + NADH + H(+) = a ubiquinol + n Na(+)(out) + NAD(+). NQR complex catalyzes the reduction of ubiquinone-1 to ubiquinol by two successive reactions, coupled with the transport of Na(+) ions from the cytoplasm to the periplasm. NqrA to NqrE are probably involved in the second step, the conversion of ubisemiquinone to ubiquinol. The protein is Na(+)-translocating NADH-quinone reductase subunit B of Chlamydia abortus (strain DSM 27085 / S26/3) (Chlamydophila abortus).